A 567-amino-acid polypeptide reads, in one-letter code: TGF-beta receptor type-2 (567 aa).

Positions 1–23 (MGRGLLRGLWPLHIVLWTRIAST) are cleaved as a signal peptide. Residues 24-166 (IPPHVPKSVN…SPDLLLVIIQ (143 aa)) lie on the Extracellular side of the membrane. 6 disulfides stabilise this stretch: Cys51–Cys84, Cys54–Cys71, Cys61–Cys67, Cys77–Cys101, Cys121–Cys136, and Cys138–Cys143. N-linked (GlcNAc...) asparagine glycans are attached at residues Asn70 and Asn94. The helical transmembrane segment at 167 to 187 (VTGVSLLPPLGIAIAVIAIFY) threads the bilayer. The Cytoplasmic segment spans residues 188 to 567 (CYRVHRQQKL…PEDGSLNTTK (380 aa)). Positions 244 to 546 (IELDTLVGKG…RFSELEHPDR (303 aa)) constitute a Protein kinase domain. ATP contacts are provided by residues 250-258 (VGKGRFAEV) and Lys277. Catalysis depends on Asp379, which acts as the Proton acceptor. Ser409, Ser548, and Ser553 each carry phosphoserine. Residues 546-567 (RLSGRSCSQEKIPEDGSLNTTK) form a disordered region.

Belongs to the protein kinase superfamily. TKL Ser/Thr protein kinase family. TGFB receptor subfamily. As to quaternary structure, homodimer. Heterohexamer; TGFB1, TGFB2 and TGFB3 homodimeric ligands assemble a functional receptor composed of two TGFBR1 and TGFBR2 heterodimers to form a ligand-receptor heterohexamer. The respective affinity of TGFRB1 and TGFRB2 for the ligands may modulate the kinetics of assembly of the receptor and may explain the different biological activities of TGFB1, TGFB2 and TGFB3. Component of a complex composed of TSC22D1 (via N-terminus), TGFBR1 and TGFBR2; the interaction between TSC22D1 and TGFBR1 is inhibited by SMAD7 and promoted by TGFB1. Interacts with DAXX. Interacts with DYNLT4. Interacts with ZFYVE9; ZFYVE9 recruits SMAD2 and SMAD3 to the TGF-beta receptor. Interacts with and is activated by SCUBE3; this interaction does not affect TGFB1-binding to TGFBR2. Interacts with VPS39; this interaction is independent of the receptor kinase activity and of the presence of TGF-beta. Interacts with CLU. The cofactor is Mg(2+). Mn(2+) serves as cofactor. Post-translationally, phosphorylated on a Ser/Thr residue in the cytoplasmic domain.

The protein resides in the cell membrane. The protein localises to the membrane raft. The enzyme catalyses L-threonyl-[receptor-protein] + ATP = O-phospho-L-threonyl-[receptor-protein] + ADP + H(+). It carries out the reaction L-seryl-[receptor-protein] + ATP = O-phospho-L-seryl-[receptor-protein] + ADP + H(+). Functionally, transmembrane serine/threonine kinase forming with the TGF-beta type I serine/threonine kinase receptor, TGFBR1, the non-promiscuous receptor for the TGF-beta cytokines TGFB1, TGFB2 and TGFB3. Transduces the TGFB1, TGFB2 and TGFB3 signal from the cell surface to the cytoplasm and is thus regulating a plethora of physiological and pathological processes including cell cycle arrest in epithelial and hematopoietic cells, control of mesenchymal cell proliferation and differentiation, wound healing, extracellular matrix production, immunosuppression and carcinogenesis. The formation of the receptor complex composed of 2 TGFBR1 and 2 TGFBR2 molecules symmetrically bound to the cytokine dimer results in the phosphorylation and the activation of TGFRB1 by the constitutively active TGFBR2. Activated TGFBR1 phosphorylates SMAD2 which dissociates from the receptor and interacts with SMAD4. The SMAD2-SMAD4 complex is subsequently translocated to the nucleus where it modulates the transcription of the TGF-beta-regulated genes. This constitutes the canonical SMAD-dependent TGF-beta signaling cascade. Also involved in non-canonical, SMAD-independent TGF-beta signaling pathways. This chain is TGF-beta receptor type-2 (Tgfbr2), found in Rattus norvegicus (Rat).